The sequence spans 217 residues: Imidazole glycerol phosphate synthase subunit HisH (217 aa).

The Glutamine amidotransferase type-1 domain occupies 3–217; the sequence is SVAVIDYGMG…FLRWEPWSSR (215 aa). Cys-82 acts as the Nucleophile in catalysis. Residues His-193 and Glu-195 contribute to the active site.

Heterodimer of HisH and HisF.

It localises to the cytoplasm. The catalysed reaction is 5-[(5-phospho-1-deoxy-D-ribulos-1-ylimino)methylamino]-1-(5-phospho-beta-D-ribosyl)imidazole-4-carboxamide + L-glutamine = D-erythro-1-(imidazol-4-yl)glycerol 3-phosphate + 5-amino-1-(5-phospho-beta-D-ribosyl)imidazole-4-carboxamide + L-glutamate + H(+). It catalyses the reaction L-glutamine + H2O = L-glutamate + NH4(+). The protein operates within amino-acid biosynthesis; L-histidine biosynthesis; L-histidine from 5-phospho-alpha-D-ribose 1-diphosphate: step 5/9. Its function is as follows. IGPS catalyzes the conversion of PRFAR and glutamine to IGP, AICAR and glutamate. The HisH subunit catalyzes the hydrolysis of glutamine to glutamate and ammonia as part of the synthesis of IGP and AICAR. The resulting ammonia molecule is channeled to the active site of HisF. The chain is Imidazole glycerol phosphate synthase subunit HisH from Methylococcus capsulatus (strain ATCC 33009 / NCIMB 11132 / Bath).